The sequence spans 351 residues: Histidinol-phosphate aminotransferase 1 (351 aa).

Residue Lys-210 is modified to N6-(pyridoxal phosphate)lysine.

Belongs to the class-II pyridoxal-phosphate-dependent aminotransferase family. Histidinol-phosphate aminotransferase subfamily. As to quaternary structure, homodimer. Pyridoxal 5'-phosphate is required as a cofactor.

The catalysed reaction is L-histidinol phosphate + 2-oxoglutarate = 3-(imidazol-4-yl)-2-oxopropyl phosphate + L-glutamate. The protein operates within amino-acid biosynthesis; L-histidine biosynthesis; L-histidine from 5-phospho-alpha-D-ribose 1-diphosphate: step 7/9. This chain is Histidinol-phosphate aminotransferase 1 (hisC1), found in Pasteurella multocida (strain Pm70).